Consider the following 157-residue polypeptide: uncharacterized protein (157 aa).

This is an uncharacterized protein from Aquifex aeolicus (strain VF5).